Consider the following 461-residue polypeptide: UPF0210 protein LCABL_10110 (461 aa).

The protein belongs to the UPF0210 family. As to quaternary structure, homodimer.

This chain is UPF0210 protein LCABL_10110, found in Lacticaseibacillus casei (strain BL23) (Lactobacillus casei).